A 204-amino-acid chain; its full sequence is Thiamine-phosphate synthase (204 aa).

Residues 35-39 (QVREK) and Asn67 contribute to the 4-amino-2-methyl-5-(diphosphooxymethyl)pyrimidine site. Mg(2+) contacts are provided by Asp68 and Asp87. Ser106 serves as a coordination point for 4-amino-2-methyl-5-(diphosphooxymethyl)pyrimidine. 132 to 134 (TPT) is a 2-[(2R,5Z)-2-carboxy-4-methylthiazol-5(2H)-ylidene]ethyl phosphate binding site. Lys135 serves as a coordination point for 4-amino-2-methyl-5-(diphosphooxymethyl)pyrimidine. Residues Gly163 and 183–184 (VS) each bind 2-[(2R,5Z)-2-carboxy-4-methylthiazol-5(2H)-ylidene]ethyl phosphate.

The protein belongs to the thiamine-phosphate synthase family. It depends on Mg(2+) as a cofactor.

It carries out the reaction 2-[(2R,5Z)-2-carboxy-4-methylthiazol-5(2H)-ylidene]ethyl phosphate + 4-amino-2-methyl-5-(diphosphooxymethyl)pyrimidine + 2 H(+) = thiamine phosphate + CO2 + diphosphate. The enzyme catalyses 2-(2-carboxy-4-methylthiazol-5-yl)ethyl phosphate + 4-amino-2-methyl-5-(diphosphooxymethyl)pyrimidine + 2 H(+) = thiamine phosphate + CO2 + diphosphate. The catalysed reaction is 4-methyl-5-(2-phosphooxyethyl)-thiazole + 4-amino-2-methyl-5-(diphosphooxymethyl)pyrimidine + H(+) = thiamine phosphate + diphosphate. Its pathway is cofactor biosynthesis; thiamine diphosphate biosynthesis; thiamine phosphate from 4-amino-2-methyl-5-diphosphomethylpyrimidine and 4-methyl-5-(2-phosphoethyl)-thiazole: step 1/1. In terms of biological role, condenses 4-methyl-5-(beta-hydroxyethyl)thiazole monophosphate (THZ-P) and 2-methyl-4-amino-5-hydroxymethyl pyrimidine pyrophosphate (HMP-PP) to form thiamine monophosphate (TMP). The protein is Thiamine-phosphate synthase of Vibrio parahaemolyticus serotype O3:K6 (strain RIMD 2210633).